A 540-amino-acid polypeptide reads, in one-letter code: MAKILKFDEDARRALERGVNQLADTVKVTIGPKGRNVVIDKKFGAPTITNDGVTIAREVECDDPYENLGAQLVKEVATKTNDIAGDGTTTATVLAQALVREGLRNVAAGASPAALKKGIDAAVAAVSAELLDTARPIDDKSDIAAVAALSAQDKQVGELIAEAMDKVGKDGVITVEESNTFGVDLDFTEGMAFDKGYLSPYMVTDQERMEAVLDDPYILIHQGKIGSIQDLLPLLEKVIQAGGSKPLLIIAEDVEGEALSTLVVNKIRGTFNAVAVKAPGFGDRRKAMLGDMATLTGATVIAEEVGLKLDQAGLDVLGTARRVTVTKDDTTIVDGGGNAEDVQGRVAQIKAEIESTDSDWDREKLQERLAKLAGGVCVIRVGAATEVELKERKHRLEDAISATRAAVEEGIVSGGGSALVHAVKVLDDNLGRTGDEATGVAVVRRAAVEPLRWIAENAGLEGYVITTKVAELDKGQGFNAATGEYGDLVKAGVIDPVKVTRSALENAASIASLLLTTETLVVEKPAEEEPEAGHGHGHSH.

ATP contacts are provided by residues 29 to 32, 86 to 90, glycine 415, 479 to 481, and aspartate 495; these read TIGP, DGTTT, and NAA.

It belongs to the chaperonin (HSP60) family. Forms a cylinder of 14 subunits composed of two heptameric rings stacked back-to-back. Interacts with the co-chaperonin GroES.

The protein resides in the cytoplasm. It catalyses the reaction ATP + H2O + a folded polypeptide = ADP + phosphate + an unfolded polypeptide.. Its function is as follows. Together with its co-chaperonin GroES, plays an essential role in assisting protein folding. The GroEL-GroES system forms a nano-cage that allows encapsulation of the non-native substrate proteins and provides a physical environment optimized to promote and accelerate protein folding. The chain is Chaperonin GroEL 1 from Streptomyces albus G.